A 258-amino-acid polypeptide reads, in one-letter code: Ferredoxin--NADP reductase (258 aa).

One can recognise an FAD-binding FR-type domain in the interval serine 2–serine 102. Position 17 (aspartate 17) interacts with NADP(+). Residues arginine 51–serine 54, phenylalanine 67–isoleucine 69, glycine 74–threonine 77, and threonine 117 each bind FAD. NADP(+)-binding positions include valine 144–arginine 145, threonine 181–arginine 182, and arginine 190. Alanine 254 to lysine 258 serves as a coordination point for FAD.

It belongs to the ferredoxin--NADP reductase type 1 family. As to quaternary structure, monomer. The cofactor is FAD.

It carries out the reaction 2 reduced [2Fe-2S]-[ferredoxin] + NADP(+) + H(+) = 2 oxidized [2Fe-2S]-[ferredoxin] + NADPH. In terms of biological role, transports electrons between ferredoxin and NADPH. The sequence is that of Ferredoxin--NADP reductase from Azotobacter vinelandii.